The sequence spans 274 residues: Diaminopimelate epimerase (274 aa).

3 residues coordinate substrate: Asn-11, Gln-44, and Asn-64. The active-site Proton donor is the Cys-73. Substrate-binding positions include Gly-74 to Asn-75, Asn-157, Asn-190, and Glu-208 to Arg-209. The active-site Proton acceptor is Cys-217. Gly-218–Ser-219 contributes to the substrate binding site.

Belongs to the diaminopimelate epimerase family. Homodimer.

The protein localises to the cytoplasm. The catalysed reaction is (2S,6S)-2,6-diaminopimelate = meso-2,6-diaminopimelate. The protein operates within amino-acid biosynthesis; L-lysine biosynthesis via DAP pathway; DL-2,6-diaminopimelate from LL-2,6-diaminopimelate: step 1/1. Catalyzes the stereoinversion of LL-2,6-diaminopimelate (L,L-DAP) to meso-diaminopimelate (meso-DAP), a precursor of L-lysine and an essential component of the bacterial peptidoglycan. In Sodalis glossinidius (strain morsitans), this protein is Diaminopimelate epimerase.